Here is a 625-residue protein sequence, read N- to C-terminus: MDIYEAASQGRIDAIKFAVEQGCDVDGPNEDGKTPLWFAVQSGQPEACRFLMSLGAGRGPQNPSLLEVAVGGGYADIVALLWPHCNAEREHRSLKTAISLGFHEIADFLIETGAFEYQDSEVSGTESLIEDGSPERESTVFQQWERFLFVRRGQKLPLHRVFFDYALLLATKAGRNAGLRLVEFLLGESMPDVNCKIMINGQFETPLTAAAEKGNLEILATLIDHPNIDLTICGKYNWPAFLHLLASPLSISTERGRVIARRLAYKAVYNRLFIDSREIRLQGAFQNVLRFGDDGLVKQVIDLVRGAAGTLILPLLIRANEVDGLTWVLNCDGVSSKKPPPAFWVLLCQYFKRYQDQDALGLFTSVTEFLVEKKIWNQAILKCLHACNFSFIQQFFYPLSEAPPKEVTEETLSPGFENLLFSNADLNGSDPHPNGLGRLELEIIPHAFFDDPSSAAQKISLRSALPSASPNPSNPHLYSYQMELIRLEQQNKRRLFFAGDTRCPLSWAAKSHNAPLVNALLRSPQVNVNFQDPSDRTPLLYAIAVNDRPIVERLLNHRDIDLNLRDAEGRTAIFYAAQGGDLSIVQLLIGTQNVDFSIRNKNGKNVKEFAKKAKLKQDIVAALSN.

ANK repeat units lie at residues 1 to 27 (MDIY…DVDG), 31 to 60 (DGKT…GRGP), 62 to 89 (NPSL…NAER), 90 to 119 (EHRS…EYQD), 162 to 195 (FFDY…DVNC), 202 to 232 (QFET…DLTI), 500 to 530 (DTRC…NVNF), 534 to 562 (SDRT…DIDL), and 568 to 598 (EGRT…DFSI).

It functions in the pathway secondary metabolite biosynthesis. Its function is as follows. Ankyrin repeat domain-containing protein; part of the gene cluster that mediates the biosynthesis of oryzines, natural products with an unusual maleidride backbone. The two subunits of the fungal fatty acid synthase oryfasA and oryfasB probably form octenoic acid. This fatty acid is most likely activated by the acyl-CoA ligase oryP to give octenyl-CoA before the citrate synthase-like protein oryE catalyzes condensation with oxaloacetate to form tricarboxylic acid. The next steps of the pathways are conjectural, but a favorite possible route has been proposed, beginning with decarboxylation and concomitant dehydration by the decarboxylase oryM, followed by tautomerization, which may lead to the production of a diene intermediate. Reduction of this diene intermediate could give the known metabolite piliformic acid. On the pathway to oryzine B and oryzine A, however, hydroxylation of the diene by the alpha-ketoglutarate-dependent dioxygenase oryG and lactonisation by the lactonohydrolases oryH or oryL could give oryzine B directly. Finally, enoyl reduction by the dehydrogenase oryD would then convert oryzine B into oryzine A. This is Ankyrin repeat domain-containing protein oryK from Aspergillus oryzae (strain ATCC 42149 / RIB 40) (Yellow koji mold).